Here is a 565-residue protein sequence, read N- to C-terminus: Periplasmic trehalase (565 aa).

An N-terminal signal peptide occupies residues 1-30; that stretch reads MKSPAPSRPQKMALIPACIFLYFAALSVQA. Substrate-binding positions include Arg-152, 159–160, Asn-196, 205–207, 277–279, and Gly-310; these read WD, RSQ, and RPE. Active-site proton donor/acceptor residues include Asp-312 and Glu-496. Glu-511 provides a ligand contact to substrate. The segment at 540 to 565 is disordered; the sequence is DNVPATHPTVKSATTQPSTKEAQPTP. Polar residues predominate over residues 548–565; it reads TVKSATTQPSTKEAQPTP.

It belongs to the glycosyl hydrolase 37 family. As to quaternary structure, monomer.

The protein localises to the periplasm. The catalysed reaction is alpha,alpha-trehalose + H2O = alpha-D-glucose + beta-D-glucose. Provides the cells with the ability to utilize trehalose at high osmolarity by splitting it into glucose molecules that can subsequently be taken up by the phosphotransferase-mediated uptake system. This Shigella flexneri serotype 5b (strain 8401) protein is Periplasmic trehalase.